Here is a 195-residue protein sequence, read N- to C-terminus: Imidazoleglycerol-phosphate dehydratase (195 aa).

The protein belongs to the imidazoleglycerol-phosphate dehydratase family.

It is found in the cytoplasm. The enzyme catalyses D-erythro-1-(imidazol-4-yl)glycerol 3-phosphate = 3-(imidazol-4-yl)-2-oxopropyl phosphate + H2O. The protein operates within amino-acid biosynthesis; L-histidine biosynthesis; L-histidine from 5-phospho-alpha-D-ribose 1-diphosphate: step 6/9. The polypeptide is Imidazoleglycerol-phosphate dehydratase (Citrifermentans bemidjiense (strain ATCC BAA-1014 / DSM 16622 / JCM 12645 / Bem) (Geobacter bemidjiensis)).